Here is a 384-residue protein sequence, read N- to C-terminus: S-adenosylmethionine synthase (384 aa).

Histidine 16 lines the ATP pocket. Aspartate 18 is a binding site for Mg(2+). Position 44 (glutamate 44) interacts with K(+). Residues glutamate 57 and glutamine 100 each contribute to the L-methionine site. A flexible loop region spans residues 100–110; the sequence is QSADIAMGVDE. Residues 165 to 167, aspartate 240, 246 to 247, alanine 263, and lysine 267 each bind ATP; these read DAK and RK. L-methionine is bound at residue aspartate 240. Lysine 271 lines the L-methionine pocket.

It belongs to the AdoMet synthase family. As to quaternary structure, homotetramer; dimer of dimers. It depends on Mg(2+) as a cofactor. K(+) serves as cofactor.

The protein resides in the cytoplasm. It carries out the reaction L-methionine + ATP + H2O = S-adenosyl-L-methionine + phosphate + diphosphate. Its pathway is amino-acid biosynthesis; S-adenosyl-L-methionine biosynthesis; S-adenosyl-L-methionine from L-methionine: step 1/1. Functionally, catalyzes the formation of S-adenosylmethionine (AdoMet) from methionine and ATP. The overall synthetic reaction is composed of two sequential steps, AdoMet formation and the subsequent tripolyphosphate hydrolysis which occurs prior to release of AdoMet from the enzyme. This is S-adenosylmethionine synthase from Cellvibrio japonicus (strain Ueda107) (Pseudomonas fluorescens subsp. cellulosa).